Reading from the N-terminus, the 488-residue chain is Secreted triacylglycerol lipase LIP1 (488 aa).

The signal sequence occupies residues 1–26 (MPSMLSLFYLAQSLFLLLLFPLYGHA). Residues cysteine 119 and cysteine 288 are joined by a disulfide bond. Asparagine 183 carries an N-linked (GlcNAc...) asparagine glycan. Serine 201 functions as the Nucleophile in the catalytic mechanism. A glycan (N-linked (GlcNAc...) asparagine) is linked at asparagine 316. Catalysis depends on residues aspartate 348 and histidine 382. Residues 461–488 (SKSGSSLKSHSHSQTHKHRKDVSTISNA) form a disordered region. The span at 469–480 (SHSHSQTHKHRK) shows a compositional bias: basic residues.

Belongs to the AB hydrolase superfamily. Lipase family. Class Lip subfamily.

It is found in the secreted. It carries out the reaction a triacylglycerol + H2O = a diacylglycerol + a fatty acid + H(+). The catalysed reaction is a monoacylglycerol + H2O = glycerol + a fatty acid + H(+). It catalyses the reaction a diacylglycerol + H2O = a monoacylglycerol + a fatty acid + H(+). With respect to regulation, inhibited by different metal ions including Fe(2+), Fe(3+), Cu(2+), and Zn(2+). The monovalent ions Na(+) and K(+) exhibit less dramatic inhibition. In terms of biological role, secreted lipase that releases free fatty acids from monoacylglycerol and triacylglycerol but has no phospholipase or lysophospholipase activities. Has minor esterase activity. Due to an absence of fatty acid synthase genes in Malassezia species, secretory lipases are essential for the yeast to generate free fatty acids from degradation of sebum and assimilate them as lipid sources for growth. Plays important roles not only in lipid metabolism but also in the immune response of host cells and pathogenesis. Hydrolyzes lipids, such as Tween 20, 40 and 80, with Tween 80 being the best substrate. The polypeptide is Secreted triacylglycerol lipase LIP1 (Malassezia furfur (Pityriasis versicolor infection agent)).